We begin with the raw amino-acid sequence, 842 residues long: Outer membrane usher protein LpfC (842 aa).

The first 21 residues, 1-21 (MTWTHLPLGNKTSRFTQSALA), serve as a signal peptide directing secretion. C819 and C841 are disulfide-bonded.

The protein belongs to the fimbrial export usher family.

Its subcellular location is the cell outer membrane. Involved in the export and assembly of LpfA fimbrial subunits across the outer membrane. The chain is Outer membrane usher protein LpfC (lpfC) from Salmonella typhimurium (strain LT2 / SGSC1412 / ATCC 700720).